A 540-amino-acid chain; its full sequence is Cystathionine gamma-synthase 1, chloroplastic (540 aa).

Residues 1-78 (MAVSSCARAF…RNCSNIGVAQ (78 aa)) constitute a chloroplast transit peptide. Residues tyrosine 203, arginine 205, glycine 233, methionine 234, tyrosine 258, serine 353, and threonine 355 each coordinate pyridoxal 5'-phosphate. An N6-(pyridoxal phosphate)lysine modification is found at lysine 356.

Belongs to the trans-sulfuration enzymes family. Forms homotetramers composed of 2 homodimers. Pyridoxal 5'-phosphate serves as cofactor.

It is found in the plastid. The protein localises to the chloroplast. The enzyme catalyses O-phospho-L-homoserine + L-cysteine = L,L-cystathionine + phosphate. It catalyses the reaction O-succinyl-L-homoserine + L-cysteine = L,L-cystathionine + succinate + H(+). The protein operates within amino-acid biosynthesis; L-methionine biosynthesis via de novo pathway; L-cystathionine from O-succinyl-L-homoserine: step 1/1. Irreversibly inactivated by DL-propargylglycine. Its function is as follows. Catalyzes the first committed step of methionine (Met) biosynthesis. Catalyzes the formation of L-cystathionine from homoserine esters and L-cysteine, via a gamma-replacement reaction. The sequence is that of Cystathionine gamma-synthase 1, chloroplastic from Nicotiana tabacum (Common tobacco).